A 198-amino-acid chain; its full sequence is Nucleoid occlusion factor SlmA (198 aa).

The 61-residue stretch at 10–70 (NRREEILQSL…SLIEFIEDSL (61 aa)) folds into the HTH tetR-type domain. The segment at residues 33–52 (TTAKLAASVGVSEAALYRHF) is a DNA-binding region (H-T-H motif). A coiled-coil region spans residues 119–144 (DRLQGRINQLFERIEVQLRQVMREKK).

The protein belongs to the nucleoid occlusion factor SlmA family. Homodimer. Interacts with FtsZ.

It is found in the cytoplasm. It localises to the nucleoid. Its function is as follows. Required for nucleoid occlusion (NO) phenomenon, which prevents Z-ring formation and cell division over the nucleoid. Acts as a DNA-associated cell division inhibitor that binds simultaneously chromosomal DNA and FtsZ, and disrupts the assembly of FtsZ polymers. SlmA-DNA-binding sequences (SBS) are dispersed on non-Ter regions of the chromosome, preventing FtsZ polymerization at these regions. The polypeptide is Nucleoid occlusion factor SlmA (Klebsiella pneumoniae (strain 342)).